The chain runs to 358 residues: tRNA-specific 2-thiouridylase MnmA (358 aa).

ATP contacts are provided by residues 6 to 13 (ALSGGVDS) and M32. The active-site Nucleophile is C103. The cysteines at positions 103 and 201 are disulfide-linked. An ATP-binding site is contributed by G127. The interaction with tRNA stretch occupies residues 151–153 (KDQ). C201 functions as the Cysteine persulfide intermediate in the catalytic mechanism.

Belongs to the MnmA/TRMU family.

The protein resides in the cytoplasm. The enzyme catalyses S-sulfanyl-L-cysteinyl-[protein] + uridine(34) in tRNA + AH2 + ATP = 2-thiouridine(34) in tRNA + L-cysteinyl-[protein] + A + AMP + diphosphate + H(+). In terms of biological role, catalyzes the 2-thiolation of uridine at the wobble position (U34) of tRNA, leading to the formation of s(2)U34. The polypeptide is tRNA-specific 2-thiouridylase MnmA (Thermotoga sp. (strain RQ2)).